The sequence spans 391 residues: Aminoacetone oxidase (391 aa).

6 residues coordinate FAD: Ala-14, Glu-33, Ile-134, Glu-362, Asn-374, and Ile-375.

This sequence belongs to the BaiN/RdsA family. In terms of assembly, monomer. Requires FAD as cofactor.

Flavoprotein that probably catalyzes the condensation of two molecules of aminoacetone to yield 3,6-dimethyl-2,5-dihydropyrazine, which is subsequently oxidized to 2,5-dimethylpyrazine. It could be involved in a microbial defense mechanism related to aminoacetone catabolism through a pathway yielding dimethylpyrazine derivatives instead of methylglyoxal. It has also low aminoacetone oxidase activity, and can produce hydrogen peroxide from aminoacetone. In addition, it shows very low L-amino acid oxidase activity, and can produce hydrogen peroxide from peptone and from seven amino acids, L-aspartate, L-tryptophan, L-lysine, L-isoleucine, L-arginine, L-asparagine and L-glutamine. It cannot use L-malate, oxaloacetate or alpha-aminobutyrate. Plays a role in antioxidant defense. The sequence is that of Aminoacetone oxidase from Streptococcus cristatus.